The sequence spans 426 residues: Serine--tRNA ligase (426 aa).

Position 233-235 (233-235) interacts with L-serine; sequence TAE. 264-266 is a binding site for ATP; that stretch reads RSE. E287 provides a ligand contact to L-serine. An ATP-binding site is contributed by 351–354; that stretch reads EISS. S387 provides a ligand contact to L-serine.

It belongs to the class-II aminoacyl-tRNA synthetase family. Type-1 seryl-tRNA synthetase subfamily. In terms of assembly, homodimer. The tRNA molecule binds across the dimer.

It is found in the cytoplasm. The enzyme catalyses tRNA(Ser) + L-serine + ATP = L-seryl-tRNA(Ser) + AMP + diphosphate + H(+). It catalyses the reaction tRNA(Sec) + L-serine + ATP = L-seryl-tRNA(Sec) + AMP + diphosphate + H(+). The protein operates within aminoacyl-tRNA biosynthesis; selenocysteinyl-tRNA(Sec) biosynthesis; L-seryl-tRNA(Sec) from L-serine and tRNA(Sec): step 1/1. Functionally, catalyzes the attachment of serine to tRNA(Ser). Is also able to aminoacylate tRNA(Sec) with serine, to form the misacylated tRNA L-seryl-tRNA(Sec), which will be further converted into selenocysteinyl-tRNA(Sec). The sequence is that of Serine--tRNA ligase from Clostridium botulinum (strain Hall / ATCC 3502 / NCTC 13319 / Type A).